The sequence spans 456 residues: Bifunctional protein GlmU (456 aa).

The tract at residues 1 to 229 is pyrophosphorylase; the sequence is MLNSAMSVVI…LSEVEGVNNR (229 aa). UDP-N-acetyl-alpha-D-glucosamine-binding positions include 11–14, K25, Q76, 81–82, 103–105, G140, E154, N169, and N227; these read LAAG, GT, and YGD. D105 provides a ligand contact to Mg(2+). N227 contacts Mg(2+). Positions 230–250 are linker; sequence LQLSRLERVYQSEQAEKLLLA. The tract at residues 251-456 is N-acetyltransferase; that stretch reads GVMLRDPARF…QGWQRPAKKK (206 aa). UDP-N-acetyl-alpha-D-glucosamine is bound by residues R333 and K351. The Proton acceptor role is filled by H363. Y366 and N377 together coordinate UDP-N-acetyl-alpha-D-glucosamine. Acetyl-CoA-binding positions include A380, 386-387, S405, A423, and R440; that span reads NY.

The protein in the N-terminal section; belongs to the N-acetylglucosamine-1-phosphate uridyltransferase family. In the C-terminal section; belongs to the transferase hexapeptide repeat family. As to quaternary structure, homotrimer. The cofactor is Mg(2+).

It localises to the cytoplasm. It carries out the reaction alpha-D-glucosamine 1-phosphate + acetyl-CoA = N-acetyl-alpha-D-glucosamine 1-phosphate + CoA + H(+). The enzyme catalyses N-acetyl-alpha-D-glucosamine 1-phosphate + UTP + H(+) = UDP-N-acetyl-alpha-D-glucosamine + diphosphate. Its pathway is nucleotide-sugar biosynthesis; UDP-N-acetyl-alpha-D-glucosamine biosynthesis; N-acetyl-alpha-D-glucosamine 1-phosphate from alpha-D-glucosamine 6-phosphate (route II): step 2/2. It functions in the pathway nucleotide-sugar biosynthesis; UDP-N-acetyl-alpha-D-glucosamine biosynthesis; UDP-N-acetyl-alpha-D-glucosamine from N-acetyl-alpha-D-glucosamine 1-phosphate: step 1/1. It participates in bacterial outer membrane biogenesis; LPS lipid A biosynthesis. Catalyzes the last two sequential reactions in the de novo biosynthetic pathway for UDP-N-acetylglucosamine (UDP-GlcNAc). The C-terminal domain catalyzes the transfer of acetyl group from acetyl coenzyme A to glucosamine-1-phosphate (GlcN-1-P) to produce N-acetylglucosamine-1-phosphate (GlcNAc-1-P), which is converted into UDP-GlcNAc by the transfer of uridine 5-monophosphate (from uridine 5-triphosphate), a reaction catalyzed by the N-terminal domain. In Citrobacter koseri (strain ATCC BAA-895 / CDC 4225-83 / SGSC4696), this protein is Bifunctional protein GlmU.